Here is a 397-residue protein sequence, read N- to C-terminus: Argininosuccinate synthase (397 aa).

8–16 lines the ATP pocket; the sequence is AYSGGLDTS. The L-citrulline site is built by Tyr-86 and Ser-91. Gly-116 serves as a coordination point for ATP. 3 residues coordinate L-aspartate: Thr-118, Asn-122, and Asp-123. L-citrulline is bound at residue Asn-122. Residues Arg-126, Ser-175, Ser-184, Glu-260, and Tyr-272 each coordinate L-citrulline.

It belongs to the argininosuccinate synthase family. Type 1 subfamily. In terms of assembly, homotetramer.

It localises to the cytoplasm. The enzyme catalyses L-citrulline + L-aspartate + ATP = 2-(N(omega)-L-arginino)succinate + AMP + diphosphate + H(+). It functions in the pathway amino-acid biosynthesis; L-arginine biosynthesis; L-arginine from L-ornithine and carbamoyl phosphate: step 2/3. In Clostridium botulinum (strain Kyoto / Type A2), this protein is Argininosuccinate synthase.